The chain runs to 79 residues: Alpha-elapitoxin-Aa2e (79 aa).

5 disulfides stabilise this stretch: cysteine 3–cysteine 20, cysteine 13–cysteine 41, cysteine 26–cysteine 30, cysteine 45–cysteine 56, and cysteine 57–cysteine 62.

The protein belongs to the three-finger toxin family. Long-chain subfamily. Type II alpha-neurotoxin sub-subfamily. As to expression, expressed by the venom gland.

The protein localises to the secreted. Its function is as follows. Binds with high affinity to muscular (alpha-1/CHRNA1) and neuronal (alpha-7/CHRNA7) nicotinic acetylcholine receptor (nAChR) and inhibits acetylcholine from binding to the receptor, thereby impairing neuromuscular and neuronal transmission. Produces paralysis, clear dyspnea and lethality on mice. The polypeptide is Alpha-elapitoxin-Aa2e (Acanthophis antarcticus (Common death adder)).